Consider the following 500-residue polypeptide: Lysine--tRNA ligase (500 aa).

Residues E406 and E413 each coordinate Mg(2+).

This sequence belongs to the class-II aminoacyl-tRNA synthetase family. Homodimer. Requires Mg(2+) as cofactor.

The protein resides in the cytoplasm. It carries out the reaction tRNA(Lys) + L-lysine + ATP = L-lysyl-tRNA(Lys) + AMP + diphosphate. This Sulfolobus acidocaldarius (strain ATCC 33909 / DSM 639 / JCM 8929 / NBRC 15157 / NCIMB 11770) protein is Lysine--tRNA ligase.